Consider the following 465-residue polypeptide: Clusterin-like protein 1 (465 aa).

An N-terminal signal peptide occupies residues 1–20 (MKPSLLVFTVYLLWLKDCHC). Residues 62-106 (MMERREEEHTNLMKTLKKCKEEKQEALKLMNEVQEHLEEEESLCQ) adopt a coiled-coil conformation. Disulfide bonds link cysteine 105/cysteine 333, cysteine 116/cysteine 325, cysteine 119/cysteine 322, and cysteine 124/cysteine 315. N-linked (GlcNAc...) asparagine glycosylation is found at asparagine 196, asparagine 257, asparagine 285, asparagine 311, asparagine 351, asparagine 412, and asparagine 430.

It belongs to the clusterin family. As to expression, retina-specific (at protein level). In the light-adapted retina, expressed in the outer segment of cone photoreceptors. In the dark-adapted retina, strongly expressed in the outer plexiform layer in the region of contact between the cone pedicles and second order neurons with little or no expression in the cone photoreceptor outer segments.

It is found in the secreted. This is Clusterin-like protein 1 (CLUL1) from Canis lupus familiaris (Dog).